The following is a 525-amino-acid chain: Glutamate--cysteine ligase (525 aa).

The protein belongs to the glutamate--cysteine ligase type 1 family. Type 1 subfamily.

It carries out the reaction L-cysteine + L-glutamate + ATP = gamma-L-glutamyl-L-cysteine + ADP + phosphate + H(+). It functions in the pathway sulfur metabolism; glutathione biosynthesis; glutathione from L-cysteine and L-glutamate: step 1/2. In Hahella chejuensis (strain KCTC 2396), this protein is Glutamate--cysteine ligase.